Reading from the N-terminus, the 357-residue chain is DNA integrity scanning protein DisA (357 aa).

A DAC domain is found at 8–146 (VKSMINILQL…GNLRYTLKDI (139 aa)). ATP is bound by residues G75, L93, and 106 to 110 (MRHRT).

This sequence belongs to the DisA family. In terms of assembly, homooctamer. Requires Mg(2+) as cofactor.

It carries out the reaction 2 ATP = 3',3'-c-di-AMP + 2 diphosphate. Its function is as follows. Participates in a DNA-damage check-point that is active prior to asymmetric division when DNA is damaged. DisA forms globular foci that rapidly scan along the chromosomes during sporulation, searching for lesions. When a lesion is present, DisA pauses at the lesion site. This triggers a cellular response that culminates in a temporary block in sporulation initiation. In terms of biological role, also has diadenylate cyclase activity, catalyzing the condensation of 2 ATP molecules into cyclic di-AMP (c-di-AMP). c-di-AMP acts as a signaling molecule that couples DNA integrity with progression of sporulation. The rise in c-di-AMP level generated by DisA while scanning the chromosome, operates as a positive signal that advances sporulation; upon encountering a lesion, the DisA focus arrests at the damaged site and halts c-di-AMP synthesis. The polypeptide is DNA integrity scanning protein DisA (Bacillus anthracis (strain CDC 684 / NRRL 3495)).